We begin with the raw amino-acid sequence, 386 residues long: Demethylsterigmatocystin 6-O-methyltransferase (386 aa).

137–150 (FDISGPCTQILPDF) is a binding site for substrate. A substrate binding region spans residues 177 to 197 (MFEWMPQHPKHMESLGHLMAL). S-adenosyl-L-methionine contacts are provided by residues 228-229 (GG), D253, 273-274 (NF), and R289. The active-site Proton acceptor is the H293.

This sequence belongs to the class I-like SAM-binding methyltransferase superfamily. Cation-independent O-methyltransferase family. COMT subfamily.

It catalyses the reaction 6-demethylsterigmatocystin + S-adenosyl-L-methionine = sterigmatocystin + S-adenosyl-L-homocysteine + H(+). It participates in mycotoxin biosynthesis; aflatoxin biosynthesis. In terms of biological role, catalyzes both the conversion of demethylsterigmatocystin (DMST) to sterigmatocystin and the conversion of dihydrodemethylsterigmatocystin to dihydrosterigmatocystin (DHDMST) during aflatoxin biosynthesis. The protein is Demethylsterigmatocystin 6-O-methyltransferase (omtB) of Aspergillus flavus (strain ATCC 200026 / FGSC A1120 / IAM 13836 / NRRL 3357 / JCM 12722 / SRRC 167).